A 442-amino-acid polypeptide reads, in one-letter code: Glutamyl-tRNA reductase (442 aa).

Substrate contacts are provided by residues Thr49–Arg52, Ser109, Glu114–Gln116, and Gln120. The active-site Nucleophile is the Cys50. Residue Gly198–Ala203 coordinates NADP(+). The segment at Met420 to Lys442 is disordered. Residues Asp433 to Lys442 show a composition bias toward basic and acidic residues.

It belongs to the glutamyl-tRNA reductase family. Homodimer.

It catalyses the reaction (S)-4-amino-5-oxopentanoate + tRNA(Glu) + NADP(+) = L-glutamyl-tRNA(Glu) + NADPH + H(+). It participates in porphyrin-containing compound metabolism; protoporphyrin-IX biosynthesis; 5-aminolevulinate from L-glutamyl-tRNA(Glu): step 1/2. The protein operates within porphyrin-containing compound metabolism; chlorophyll biosynthesis. Its function is as follows. Catalyzes the NADPH-dependent reduction of glutamyl-tRNA(Glu) to glutamate 1-semialdehyde (GSA). The protein is Glutamyl-tRNA reductase of Synechococcus sp. (strain RCC307).